The sequence spans 218 residues: Ribose-5-phosphate isomerase A (218 aa).

Residues 28–31, 81–84, and 94–97 each bind substrate; these read TGST, DGAD, and KGGG. The active-site Proton acceptor is Glu103. Position 121 (Lys121) interacts with substrate.

The protein belongs to the ribose 5-phosphate isomerase family. In terms of assembly, homodimer.

The enzyme catalyses aldehydo-D-ribose 5-phosphate = D-ribulose 5-phosphate. Its pathway is carbohydrate degradation; pentose phosphate pathway; D-ribose 5-phosphate from D-ribulose 5-phosphate (non-oxidative stage): step 1/1. Its function is as follows. Catalyzes the reversible conversion of ribose-5-phosphate to ribulose 5-phosphate. In Aliivibrio salmonicida (strain LFI1238) (Vibrio salmonicida (strain LFI1238)), this protein is Ribose-5-phosphate isomerase A.